A 626-amino-acid chain; its full sequence is Chaperone protein HtpG (626 aa).

The tract at residues 1–341 (METKQFKAES…SEDLSLNISR (341 aa)) is a; substrate-binding. The segment at 342 to 552 (EILQHDRQLK…EGELSIEMEK (211 aa)) is b. Residues 490-509 (DLGIEGEEKENTSSSDDKEN) are disordered. Basic and acidic residues predominate over residues 498-509 (KENTSSSDDKEN). The c stretch occupies residues 553 to 626 (VLNAMPNNQN…FTNNICKIMK (74 aa)).

This sequence belongs to the heat shock protein 90 family. In terms of assembly, homodimer.

Its subcellular location is the cytoplasm. Functionally, molecular chaperone. Has ATPase activity. The polypeptide is Chaperone protein HtpG (Clostridium botulinum (strain Loch Maree / Type A3)).